The sequence spans 405 residues: Saccharopepsin (405 aa).

The signal sequence occupies residues 1 to 22; the sequence is MFSLKALLPLALLLVSANQVAA. Residues 23–76 constitute a propeptide, activation peptide; sequence KVHKAKIYKHELSDEMKEVTFEQHLAHLGQKYLTQFEKANPEVVFSREHPFFTE. Positions 91–402 constitute a Peptidase A1 domain; the sequence is YYTDITLGTP…DLGNNAVGLA (312 aa). D109 is an active-site residue. An intrachain disulfide couples C122 to C127. N-linked (GlcNAc...) asparagine glycosylation occurs at N144. Residue D294 is part of the active site. C328 and C361 form a disulfide bridge. N-linked (GlcNAc...) asparagine glycosylation is present at N345.

The protein belongs to the peptidase A1 family.

It is found in the vacuole. It carries out the reaction Hydrolysis of proteins with broad specificity for peptide bonds. Cleaves -Leu-Leu-|-Val-Tyr- bond in a synthetic substrate. Does not act on esters of Tyr or Arg.. Functionally, aspartyl protease implicated in the post-translational regulation of S.cerevisiae vacuolar proteinases. Acts on YSCB, on YSCY and on itself. The sequence is that of Saccharopepsin (PEP4) from Saccharomyces cerevisiae (strain ATCC 204508 / S288c) (Baker's yeast).